Consider the following 449-residue polypeptide: UDP-N-acetylmuramoylalanine--D-glutamate ligase (449 aa).

118-124 (GTNGKTT) lines the ATP pocket.

It belongs to the MurCDEF family.

It localises to the cytoplasm. The catalysed reaction is UDP-N-acetyl-alpha-D-muramoyl-L-alanine + D-glutamate + ATP = UDP-N-acetyl-alpha-D-muramoyl-L-alanyl-D-glutamate + ADP + phosphate + H(+). The protein operates within cell wall biogenesis; peptidoglycan biosynthesis. Its function is as follows. Cell wall formation. Catalyzes the addition of glutamate to the nucleotide precursor UDP-N-acetylmuramoyl-L-alanine (UMA). In Staphylococcus aureus (strain MW2), this protein is UDP-N-acetylmuramoylalanine--D-glutamate ligase.